Here is a 1307-residue protein sequence, read N- to C-terminus: Cellulose synthase 2 operon protein C (1307 aa).

An N-terminal signal peptide occupies residues 1-55 (MTRPRGPAPRDGAAWRRDPARRVLLRDAVRGREGGLRLACAVMAGLIVSGGVACA). 9 TPR repeats span residues 97–130 (LELLLDQGYYWLGQHNLGKAHETIQRALSIEPDN), 270–303 (LDGLRALARSNVSAQIRSDAVAAWRDALLWEPIT), 339–372 (AANDRQQGYALLSRHMLDAAAREFHRAVDIDPHD), 374–406 (DALGGLGLVAQARQQPALARQYFLQAMQAGPDA), 458–491 (LTVLSLQAALARRQGDTADAVRLYREVVRRAPRD), 493–525 (GALFSLGALDVQVGDATEAADILTRLQRLAPAM), 528–561 (RLEAMMLSAQADRAGDDDGRIALLRRAQALDPDD), 754–787 (IGLAIMTADGFDRYGRTAQAAQVLAPVLRAHPDS), and 788–821 (VEAHLAMGRVYQTRNMATRALEEDETALRLKPAN).

It belongs to the AcsC/BcsC family.

The protein resides in the cell outer membrane. It functions in the pathway glycan metabolism; bacterial cellulose biosynthesis. Functionally, required for maximal bacterial cellulose synthesis. The polypeptide is Cellulose synthase 2 operon protein C (bcsCII) (Komagataeibacter xylinus (Gluconacetobacter xylinus)).